The primary structure comprises 313 residues: Protein OPG185 (313 aa).

An N-terminal signal peptide occupies residues 1–16; it reads MTQLPILLLLISLVYA. Topologically, residues 17–274 are virion surface; that stretch reads TPSPQTSKKI…TSISNYKTKD (258 aa). N-linked (GlcNAc...) asparagine; by host glycosylation is found at Asn37, Asn69, Asn112, Asn159, Asn194, and Asn252. A helical transmembrane segment spans residues 275–295; the sequence is FVEIFGITTLIILSAVAIFCI. Residues 296–313 lie on the Intravirion side of the membrane; it reads TYYICNKHPRKYKTENKV.

The protein belongs to the orthopoxvirus OPG185 family. As to quaternary structure, heterodimerizes with OPG040. The heterodimer OPG185-OPG040 interacts with components of the entry fusion complex OPG143 and OPG094. Heterodimer with C3/VPC protein; disulfide-linked. In terms of processing, glycosylated; contains phosphate and sulfate-substituted glycans. O-glycosylation is required for hemagglutination and hemadsorption activities of infected cell membranes.

It is found in the virion membrane. It localises to the host membrane. Functionally, prevents cell to cell fusion by interacting with and directing the viral OPG040 protein on the host plasma membrane. The OPG185-OPG040 complex associates with components of the entry fusion complex (EFC) presumably to avoid superinfection and syncytium formation. Via its interaction with C3/VCP protein, protects the infected cell and probably also the extracellular enveloped virus from complement attack. In Monkeypox virus, this protein is Protein OPG185 (OPG185).